A 506-amino-acid polypeptide reads, in one-letter code: Glycine--tRNA ligase (506 aa).

The substrate site is built by Arg-99 and Glu-189. ATP is bound by residues 221-223 (RNE), 231-236 (FRVREL), 306-307 (EI), and 365-368 (GVDR). Position 236-240 (236-240 (LEQME)) interacts with substrate. Residue 361-365 (EPSAG) coordinates substrate.

Belongs to the class-II aminoacyl-tRNA synthetase family. In terms of assembly, homodimer.

The protein resides in the cytoplasm. It carries out the reaction tRNA(Gly) + glycine + ATP = glycyl-tRNA(Gly) + AMP + diphosphate. Functionally, catalyzes the attachment of glycine to tRNA(Gly). The polypeptide is Glycine--tRNA ligase (Deinococcus radiodurans (strain ATCC 13939 / DSM 20539 / JCM 16871 / CCUG 27074 / LMG 4051 / NBRC 15346 / NCIMB 9279 / VKM B-1422 / R1)).